The chain runs to 326 residues: Polyprenal reductase (326 aa).

A run of 5 helical transmembrane segments spans residues Met-26–Glu-46, His-84–Val-104, Ile-167–Leu-187, Ile-212–Leu-232, and Leu-256–Ala-276.

This sequence belongs to the steroid 5-alpha reductase family. Polyprenal reductase subfamily.

The protein resides in the endoplasmic reticulum membrane. The enzyme catalyses a di-trans,poly-cis-dolichal + NADP(+) = a di-trans,poly-cis-polyprenal + NADPH + H(+). Its pathway is protein modification; protein glycosylation. In terms of biological role, plays a key role in early steps of protein N-linked glycosylation by being involved in the conversion of polyprenol into dolichol. Acts as a polyprenal reductase that mediates the reduction of polyprenal into dolichal in a NADP-dependent mechanism. Dolichols are required for the synthesis of dolichol-linked monosaccharides and the oligosaccharide precursor used for N-glycosylation. The protein is Polyprenal reductase of Drosophila melanogaster (Fruit fly).